The chain runs to 121 residues: Small ribosomal subunit protein uS13 (121 aa).

The segment at 97-121 (VRGQRTRTNARTRRGARKTVAGKKK) is disordered. Positions 100–121 (QRTRTNARTRRGARKTVAGKKK) are enriched in basic residues.

It belongs to the universal ribosomal protein uS13 family. As to quaternary structure, part of the 30S ribosomal subunit. Forms a loose heterodimer with protein S19. Forms two bridges to the 50S subunit in the 70S ribosome.

In terms of biological role, located at the top of the head of the 30S subunit, it contacts several helices of the 16S rRNA. In the 70S ribosome it contacts the 23S rRNA (bridge B1a) and protein L5 of the 50S subunit (bridge B1b), connecting the 2 subunits; these bridges are implicated in subunit movement. Contacts the tRNAs in the A and P-sites. The sequence is that of Small ribosomal subunit protein uS13 from Parasynechococcus marenigrum (strain WH8102).